The following is a 222-amino-acid chain: Probable transaldolase 2 (222 aa).

The Schiff-base intermediate with substrate role is filled by Lys90.

This sequence belongs to the transaldolase family. Type 3B subfamily.

It localises to the cytoplasm. The catalysed reaction is D-sedoheptulose 7-phosphate + D-glyceraldehyde 3-phosphate = D-erythrose 4-phosphate + beta-D-fructose 6-phosphate. It functions in the pathway carbohydrate degradation; pentose phosphate pathway; D-glyceraldehyde 3-phosphate and beta-D-fructose 6-phosphate from D-ribose 5-phosphate and D-xylulose 5-phosphate (non-oxidative stage): step 2/3. Functionally, transaldolase is important for the balance of metabolites in the pentose-phosphate pathway. The chain is Probable transaldolase 2 from Bacillus anthracis.